We begin with the raw amino-acid sequence, 417 residues long: MIDPEILVNTPDIVRLSQKKRGESQSIVEDALIARRNLRTAINNFETLRAEQNVLSKKIAGSEDSDRPELMRVANLLAERVKNAREEQEKANSEWKKLLFEIPNIVSSEAPYGVEDKCAVMKTVGDIPEFDFEPADHLQLGEQLDAIDVSRGVKVSGTRFYFLKGWGARLELAVMNLALDLALKSGLTLLITPTLVKPEIMLGTGFLGRHEGEVYRLPSGYYLTGTSEVAIAGYHSDEILDISSGPIRYAGWSSCYRREAGSHGRDTRGIMRVHQFSKLEMFSYVHPQQSTRELEHIVSMQEKMLNLLEIPYRVSDIAAEELGTSASRKYDLEAWIPSQNTWREVTSASDCTTFQARRLNVRYRDESGRTGYVATLNGTLATTRFLVAILENHQTSNGSIRVPEALRPLLGQDVIER.

226 to 228 lines the L-serine pocket; the sequence is TSE. ATP contacts are provided by residues 257–259 and V273; that span reads RRE. E280 contributes to the L-serine binding site. Residue 344 to 347 coordinates ATP; sequence EVTS. T379 contacts L-serine.

Belongs to the class-II aminoacyl-tRNA synthetase family. Type-1 seryl-tRNA synthetase subfamily. As to quaternary structure, homodimer. The tRNA molecule binds across the dimer.

The protein localises to the cytoplasm. It carries out the reaction tRNA(Ser) + L-serine + ATP = L-seryl-tRNA(Ser) + AMP + diphosphate + H(+). The catalysed reaction is tRNA(Sec) + L-serine + ATP = L-seryl-tRNA(Sec) + AMP + diphosphate + H(+). Its pathway is aminoacyl-tRNA biosynthesis; selenocysteinyl-tRNA(Sec) biosynthesis; L-seryl-tRNA(Sec) from L-serine and tRNA(Sec): step 1/1. Its function is as follows. Catalyzes the attachment of serine to tRNA(Ser). Is also able to aminoacylate tRNA(Sec) with serine, to form the misacylated tRNA L-seryl-tRNA(Sec), which will be further converted into selenocysteinyl-tRNA(Sec). This chain is Serine--tRNA ligase, found in Tropheryma whipplei (strain Twist) (Whipple's bacillus).